The sequence spans 276 residues: Bis(5'-nucleosyl)-tetraphosphatase, symmetrical (276 aa).

This sequence belongs to the Ap4A hydrolase family.

It carries out the reaction P(1),P(4)-bis(5'-adenosyl) tetraphosphate + H2O = 2 ADP + 2 H(+). Hydrolyzes diadenosine 5',5'''-P1,P4-tetraphosphate to yield ADP. The protein is Bis(5'-nucleosyl)-tetraphosphatase, symmetrical of Legionella pneumophila (strain Corby).